Here is an 827-residue protein sequence, read N- to C-terminus: SH3-containing GRB2-like protein 3-interacting protein 1 (827 aa).

Disordered stretches follow at residues 1 to 115, 142 to 205, and 223 to 278; these read MMEG…ESHK, SIGN…GPPL, and IWGS…QAAT. Composition is skewed to basic and acidic residues over residues 16 to 32 and 40 to 54; these read RKKEKDTDSTGSPDRDG and PPYHSKAECAREGGK. 8 positions are modified to phosphoserine: Ser78, Ser104, Ser105, Ser107, Ser149, Ser151, Ser156, and Ser169. Phosphothreonine is present on residues Thr180 and Thr182. Ser236 carries the post-translational modification Phosphoserine. Over residues 245–260 the composition is skewed to pro residues; the sequence is TGTPPPLPPKAVPATP. 2 positions are modified to phosphothreonine: Thr247 and Thr259. A phosphoserine mark is found at Ser265, Ser287, Ser289, Ser300, Ser316, and Ser319. Polar residues predominate over residues 265 to 276; that stretch reads SPLTVATGNDQA. Positions 314-333 are enriched in basic and acidic residues; sequence HFSDASPEHVTPELTPREKV. A disordered region spans residues 314-523; sequence HFSDASPEHV…LSAATTPTVE (210 aa). 3 positions are modified to phosphothreonine: Thr324, Thr328, and Thr335. Positions 336-345 are enriched in low complexity; that stretch reads PPAASDIPAD. A compositionally biased stretch (pro residues) spans 346–369; the sequence is SPAPGPPGPPGSAGPPGPPGPRHV. Ser371 bears the Phosphoserine mark. Residues 377-392 show a composition bias toward basic and acidic residues; it reads EVQKKVAEQTFIKDDY. Ser398 carries the post-translational modification Phosphoserine. Thr409 carries the phosphothreonine modification. The segment covering 436-455 has biased composition (low complexity); sequence ASGASSPARPATPLVPCSST. Positions 456-474 are enriched in pro residues; the sequence is TPPPPPPRPPSRPKLPPGK. Low complexity-rich tracts occupy residues 481–491 and 498–521; these read SRPFSPPIHSS and PLARAESTSSISSTNSLSAATTPT. Ser485 is subject to Phosphoserine. An MHD domain is found at 558 to 826; it reads TLPVAAAFTE…RFAAGKYLAD (269 aa). Interaction with DPF motifs-containing proteins regions lie at residues 560-566, 592-594, 666-669, and 812-817; these read PVAAAFT, SFP, TYYN, and SLIKKR. Positions 648–827 are necessary and sufficient to mediate interaction with CANX; the sequence is MPNLMTHLKK…FAAGKYLADN (180 aa).

Interacts with proteins essential or regulating the formation of functional clathrin-coated pits. Interacts with CANX. Interacts with AP2A1. Interacts with EPS15. Interacts with SH3GL3. Interacts with AMPH. Interacts with ITSN1 (via SH3 domains). Interacts with and REPS1. As to expression, specifically expressed in brain (at protein level).

The protein localises to the membrane. It localises to the clathrin-coated pit. In terms of biological role, may function in clathrin-mediated endocytosis. Has both a membrane binding/tubulating activity and the ability to recruit proteins essential to the formation of functional clathrin-coated pits. Has a preference for membranes enriched in phosphatidylserine and phosphoinositides and is required for the endocytosis of the transferrin receptor. May also bind tubulin. May play a role in the regulation of energy homeostasis. This chain is SH3-containing GRB2-like protein 3-interacting protein 1 (Sgip1), found in Rattus norvegicus (Rat).